Reading from the N-terminus, the 122-residue chain is Large ribosomal subunit protein uL14 (122 aa).

This sequence belongs to the universal ribosomal protein uL14 family. In terms of assembly, part of the 50S ribosomal subunit. Forms a cluster with proteins L3 and L19. In the 70S ribosome, L14 and L19 interact and together make contacts with the 16S rRNA in bridges B5 and B8.

Functionally, binds to 23S rRNA. Forms part of two intersubunit bridges in the 70S ribosome. The chain is Large ribosomal subunit protein uL14 from Hyphomonas neptunium (strain ATCC 15444).